A 637-amino-acid chain; its full sequence is Chaperone protein HtpG (637 aa).

The segment at 1–345 (MSQQETHGFQ…SNDLPLNVSR (345 aa)) is a; substrate-binding. A b region spans residues 346-562 (EILQDNHVTK…DGEMSTQMIK (217 aa)). Positions 563-637 (LMQAAGQPVP…MNQMLLANMK (75 aa)) are c.

Belongs to the heat shock protein 90 family. As to quaternary structure, homodimer.

Its subcellular location is the cytoplasm. In terms of biological role, molecular chaperone. Has ATPase activity. The polypeptide is Chaperone protein HtpG (Shewanella baltica (strain OS155 / ATCC BAA-1091)).